Reading from the N-terminus, the 78-residue chain is Serine--glyoxylate aminotransferase (78 aa).

This sequence belongs to the class-V pyridoxal-phosphate-dependent aminotransferase family. As to quaternary structure, homodimer. Requires pyridoxal 5'-phosphate as cofactor. Expressed in leaves but not in root tissue or seedlings.

The protein localises to the peroxisome. It carries out the reaction glyoxylate + L-serine = 3-hydroxypyruvate + glycine. The enzyme catalyses glyoxylate + L-alanine = glycine + pyruvate. With respect to regulation, inhibited by aminooxyacetate. In Triticum aestivum (Wheat), this protein is Serine--glyoxylate aminotransferase.